The chain runs to 294 residues: MKTKVIVVIGPTAVGKTALGIDLAQRYNGEIISGDSQQVYRKLDIGTAKASPEEQAAAVHHLIDVRDVTEGYSAYEFVAEAKALIADIKSRGKLPIIVGGTGLYIQSLLEGYHLGGLVDQEQVLAYRAELDCLSDEDLETMAEQAGLMVEGNSRRRIIRGLELKKFGENLENTESGYEPLYICLTDDRQVLYDRINQRVDKMMAAGLLDEVSWLYQEHPEAQAAMGIGYKEFFPYLEGQISLEEAIDNVKQNSRRFAKRQLTWFRNRMAVDFYQVSEEAVKDRIYTAVEEFLDD.

Position 10–17 (10–17 (GPTAVGKT)) interacts with ATP. 12–17 (TAVGKT) lines the substrate pocket. An interaction with substrate tRNA region spans residues 35–38 (DSQQ).

The protein belongs to the IPP transferase family. As to quaternary structure, monomer. Mg(2+) serves as cofactor.

It catalyses the reaction adenosine(37) in tRNA + dimethylallyl diphosphate = N(6)-dimethylallyladenosine(37) in tRNA + diphosphate. In terms of biological role, catalyzes the transfer of a dimethylallyl group onto the adenine at position 37 in tRNAs that read codons beginning with uridine, leading to the formation of N6-(dimethylallyl)adenosine (i(6)A). This is tRNA dimethylallyltransferase from Streptococcus suis (strain 05ZYH33).